A 337-amino-acid polypeptide reads, in one-letter code: Phosphate acyltransferase (337 aa).

The protein belongs to the PlsX family. In terms of assembly, homodimer. Probably interacts with PlsY.

The protein localises to the cytoplasm. The catalysed reaction is a fatty acyl-[ACP] + phosphate = an acyl phosphate + holo-[ACP]. Its pathway is lipid metabolism; phospholipid metabolism. Catalyzes the reversible formation of acyl-phosphate (acyl-PO(4)) from acyl-[acyl-carrier-protein] (acyl-ACP). This enzyme utilizes acyl-ACP as fatty acyl donor, but not acyl-CoA. The sequence is that of Phosphate acyltransferase from Hydrogenovibrio crunogenus (strain DSM 25203 / XCL-2) (Thiomicrospira crunogena).